A 37-amino-acid chain; its full sequence is Cytochrome b6-f complex subunit 7 (37 aa).

Residues 11–29 (AVLLMVLVLVGLAWGFLLL) traverse the membrane as a helical segment.

It belongs to the PetM family. In terms of assembly, the 4 large subunits of the cytochrome b6-f complex are cytochrome b6, subunit IV (17 kDa polypeptide, PetD), cytochrome f and the Rieske protein, while the 4 small subunits are PetG, PetL, PetM and PetN. The complex functions as a dimer.

The protein resides in the cellular thylakoid membrane. Functionally, component of the cytochrome b6-f complex, which mediates electron transfer between photosystem II (PSII) and photosystem I (PSI), cyclic electron flow around PSI, and state transitions. The sequence is that of Cytochrome b6-f complex subunit 7 from Rippkaea orientalis (strain PCC 8801 / RF-1) (Cyanothece sp. (strain PCC 8801)).